A 94-amino-acid polypeptide reads, in one-letter code: Putative membrane protein insertion efficiency factor (94 aa).

This sequence belongs to the UPF0161 family.

It localises to the cell inner membrane. In terms of biological role, could be involved in insertion of integral membrane proteins into the membrane. The protein is Putative membrane protein insertion efficiency factor of Albidiferax ferrireducens (strain ATCC BAA-621 / DSM 15236 / T118) (Rhodoferax ferrireducens).